The following is a 736-amino-acid chain: Probable beta-glucosidase L (736 aa).

A signal peptide spans 1–21 (MNYRVPSLKATALAMAALTQA). N-linked (GlcNAc...) asparagine glycosylation occurs at asparagine 224. Aspartate 252 is a catalytic residue. N-linked (GlcNAc...) asparagine glycosylation is found at asparagine 295, asparagine 363, asparagine 429, and asparagine 607.

The protein belongs to the glycosyl hydrolase 3 family.

The protein localises to the secreted. It carries out the reaction Hydrolysis of terminal, non-reducing beta-D-glucosyl residues with release of beta-D-glucose.. The protein operates within glycan metabolism; cellulose degradation. Its function is as follows. Beta-glucosidases are one of a number of cellulolytic enzymes involved in the degradation of cellulosic biomass. Catalyzes the last step releasing glucose from the inhibitory cellobiose. The polypeptide is Probable beta-glucosidase L (bglL) (Aspergillus terreus (strain NIH 2624 / FGSC A1156)).